The following is a 243-amino-acid chain: Protein-L-isoaspartate O-methyltransferase (243 aa).

Ser-87 is an active-site residue.

The protein belongs to the methyltransferase superfamily. L-isoaspartyl/D-aspartyl protein methyltransferase family.

It is found in the cytoplasm. The enzyme catalyses [protein]-L-isoaspartate + S-adenosyl-L-methionine = [protein]-L-isoaspartate alpha-methyl ester + S-adenosyl-L-homocysteine. In terms of biological role, catalyzes the methyl esterification of L-isoaspartyl residues in peptides and proteins that result from spontaneous decomposition of normal L-aspartyl and L-asparaginyl residues. It plays a role in the repair and/or degradation of damaged proteins. In Methanosarcina mazei (strain ATCC BAA-159 / DSM 3647 / Goe1 / Go1 / JCM 11833 / OCM 88) (Methanosarcina frisia), this protein is Protein-L-isoaspartate O-methyltransferase.